Reading from the N-terminus, the 393-residue chain is Lipid-A-disaccharide synthase (393 aa).

This sequence belongs to the LpxB family.

The catalysed reaction is a lipid X + a UDP-2-N,3-O-bis[(3R)-3-hydroxyacyl]-alpha-D-glucosamine = a lipid A disaccharide + UDP + H(+). The protein operates within bacterial outer membrane biogenesis; LPS lipid A biosynthesis. Functionally, condensation of UDP-2,3-diacylglucosamine and 2,3-diacylglucosamine-1-phosphate to form lipid A disaccharide, a precursor of lipid A, a phosphorylated glycolipid that anchors the lipopolysaccharide to the outer membrane of the cell. The protein is Lipid-A-disaccharide synthase of Bordetella petrii (strain ATCC BAA-461 / DSM 12804 / CCUG 43448).